Reading from the N-terminus, the 315-residue chain is Acyl transferase (315 aa).

Active-site charge relay system residues include Ser-116, Asp-213, and His-243.

Belongs to the LuxD family.

Its pathway is lipid metabolism; fatty acid reduction for biolumincescence. In terms of biological role, acyl transferase is part of the fatty acid reductase system required for aldehyde biosynthesis; it produces fatty acids for the luminescent reaction. The chain is Acyl transferase from Photobacterium leiognathi.